The primary structure comprises 303 residues: MKITVLGCGALGQLWLTALCKQGHEVQGWLRVPQPYCSVNLVETDGSIFNESLTANDPDFLATSDLLLVTLKAWQVSDAVKSLASTLPVTTPILLIHNGMGTIEELQNIQQPLLMGTTTHAACRDGNVIIHVANGITHIGPARQQDGDYSYLADILQTVLPDVAWHNNIRAELWRKLAVNCVINPLTAIWNCPNGELRHHPQEIMQICEEVAAVIEREGHHTSAEDLRDYVMQVIDATAENISSMLQDIRTLRHTEIDYINGFLLRRARAHGIAVPENTRLFEMVKRKESEYERIGTGLPRPW.

Residues 7–12 (GCGALG), N98, and A122 contribute to the NADP(+) site. Residue N98 participates in substrate binding. K176 (proton donor) is an active-site residue. Residues N180, N184, N194, and S244 each contribute to the substrate site. E256 serves as a coordination point for NADP(+).

This sequence belongs to the ketopantoate reductase family. As to quaternary structure, monomer.

Its subcellular location is the cytoplasm. It catalyses the reaction (R)-pantoate + NADP(+) = 2-dehydropantoate + NADPH + H(+). It functions in the pathway cofactor biosynthesis; (R)-pantothenate biosynthesis; (R)-pantoate from 3-methyl-2-oxobutanoate: step 2/2. In terms of biological role, catalyzes the NADPH-dependent reduction of ketopantoate into pantoic acid. The polypeptide is 2-dehydropantoate 2-reductase (panE) (Escherichia coli O157:H7).